The sequence spans 62 residues: Large ribosomal subunit protein bL28 (62 aa).

Belongs to the bacterial ribosomal protein bL28 family.

The chain is Large ribosomal subunit protein bL28 from Clostridioides difficile (strain 630) (Peptoclostridium difficile).